We begin with the raw amino-acid sequence, 377 residues long: Chaperone protein DnaJ (377 aa).

In terms of domain architecture, J spans 5 to 70 (DCYEVLGISR…QKKAAYDQYG (66 aa)). The CR-type zinc finger occupies 133–211 (GISKEIQIPT…CHGHGRYERS (79 aa)). The Zn(2+) site is built by cysteine 146, cysteine 149, cysteine 163, cysteine 166, cysteine 185, cysteine 188, cysteine 199, and cysteine 202. CXXCXGXG motif repeat units lie at residues 146–153 (CEQCNGSG), 163–170 (CGTCYGQG), 185–192 (CPTCRGQG), and 199–206 (CHKCHGHG).

This sequence belongs to the DnaJ family. In terms of assembly, homodimer. The cofactor is Zn(2+).

The protein resides in the cytoplasm. Participates actively in the response to hyperosmotic and heat shock by preventing the aggregation of stress-denatured proteins and by disaggregating proteins, also in an autonomous, DnaK-independent fashion. Unfolded proteins bind initially to DnaJ; upon interaction with the DnaJ-bound protein, DnaK hydrolyzes its bound ATP, resulting in the formation of a stable complex. GrpE releases ADP from DnaK; ATP binding to DnaK triggers the release of the substrate protein, thus completing the reaction cycle. Several rounds of ATP-dependent interactions between DnaJ, DnaK and GrpE are required for fully efficient folding. Also involved, together with DnaK and GrpE, in the DNA replication of plasmids through activation of initiation proteins. The polypeptide is Chaperone protein DnaJ (Psychromonas ingrahamii (strain DSM 17664 / CCUG 51855 / 37)).